Reading from the N-terminus, the 189-residue chain is Cell division protein SepF (189 aa).

2 disordered regions span residues 1-75 (MEGQ…GLPG) and 155-174 (STPS…SPTP).

This sequence belongs to the SepF family. In terms of assembly, homodimer. Interacts with FtsZ.

The protein localises to the cytoplasm. Cell division protein that is part of the divisome complex and is recruited early to the Z-ring. Probably stimulates Z-ring formation, perhaps through the cross-linking of FtsZ protofilaments. Its function overlaps with FtsA. The polypeptide is Cell division protein SepF (Synechococcus sp. (strain JA-3-3Ab) (Cyanobacteria bacterium Yellowstone A-Prime)).